We begin with the raw amino-acid sequence, 815 residues long: Leucine--tRNA ligase (815 aa).

The 'HIGH' region signature appears at 42 to 52; that stretch reads PYPSGRLHMGH. Residues 574 to 578 carry the 'KMSKS' region motif; it reads KMSKS. Lys-577 lines the ATP pocket.

This sequence belongs to the class-I aminoacyl-tRNA synthetase family.

It is found in the cytoplasm. It catalyses the reaction tRNA(Leu) + L-leucine + ATP = L-leucyl-tRNA(Leu) + AMP + diphosphate. In Alcanivorax borkumensis (strain ATCC 700651 / DSM 11573 / NCIMB 13689 / SK2), this protein is Leucine--tRNA ligase.